Here is a 61-residue protein sequence, read N- to C-terminus: Large ribosomal subunit protein uL30 (61 aa).

Belongs to the universal ribosomal protein uL30 family. Part of the 50S ribosomal subunit.

This is Large ribosomal subunit protein uL30 from Chlorobium limicola (strain DSM 245 / NBRC 103803 / 6330).